Here is a 257-residue protein sequence, read N- to C-terminus: Outer membrane protein Omp26La (257 aa).

An N-terminal signal peptide occupies residues 1-19 (MKKIALFITASLIAGNTLA).

It belongs to the MipA/OmpV family.

Its subcellular location is the cell outer membrane. The protein is Outer membrane protein Omp26La of Vibrio anguillarum (Listonella anguillarum).